The following is a 389-amino-acid chain: Phospho-N-acetylmuramoyl-pentapeptide-transferase (389 aa).

Helical transmembrane passes span 21–41, 71–91, 97–117, 134–154, 167–187, 190–210, 222–242, 259–279, 286–306, 311–331, and 366–386; these read YITM…LVAG, TPTM…LLWA, FVWV…MDDY, FFWQ…AVSA, WVSS…VPFF, VSYP…IVGT, GLAI…AYVV, AAEL…FLWF, VFMG…IAVI, IVLF…MMQV, and QVVV…LSTL.

The protein belongs to the glycosyltransferase 4 family. MraY subfamily. Requires Mg(2+) as cofactor.

It localises to the cell inner membrane. The catalysed reaction is UDP-N-acetyl-alpha-D-muramoyl-L-alanyl-gamma-D-glutamyl-meso-2,6-diaminopimeloyl-D-alanyl-D-alanine + di-trans,octa-cis-undecaprenyl phosphate = di-trans,octa-cis-undecaprenyl diphospho-N-acetyl-alpha-D-muramoyl-L-alanyl-D-glutamyl-meso-2,6-diaminopimeloyl-D-alanyl-D-alanine + UMP. It functions in the pathway cell wall biogenesis; peptidoglycan biosynthesis. In terms of biological role, catalyzes the initial step of the lipid cycle reactions in the biosynthesis of the cell wall peptidoglycan: transfers peptidoglycan precursor phospho-MurNAc-pentapeptide from UDP-MurNAc-pentapeptide onto the lipid carrier undecaprenyl phosphate, yielding undecaprenyl-pyrophosphoryl-MurNAc-pentapeptide, known as lipid I. This Bordetella petrii (strain ATCC BAA-461 / DSM 12804 / CCUG 43448) protein is Phospho-N-acetylmuramoyl-pentapeptide-transferase.